Reading from the N-terminus, the 223-residue chain is Probable chemoreceptor glutamine deamidase CheD (223 aa).

The tract at residues 189–223 is disordered; it reads QTASAKAHTPPQIERFSAPAKPRFERFTRPSTATS.

Belongs to the CheD family.

It catalyses the reaction L-glutaminyl-[protein] + H2O = L-glutamyl-[protein] + NH4(+). Its function is as follows. Probably deamidates glutamine residues to glutamate on methyl-accepting chemotaxis receptors (MCPs), playing an important role in chemotaxis. This is Probable chemoreceptor glutamine deamidase CheD from Bordetella petrii (strain ATCC BAA-461 / DSM 12804 / CCUG 43448).